Consider the following 270-residue polypeptide: High choriolytic enzyme 1 (270 aa).

An N-terminal signal peptide occupies residues 1–20 (MNLAPSTCLLLLFLLDIAQA). Residues 21 to 70 (LPVWDEEGHEEGHEEGDGDDFVDITTRILTSNNNTDQLLLEGDLVAPTNR) constitute a propeptide, activation peptide. Asn53 carries an N-linked (GlcNAc...) asparagine glycan. One can recognise a Peptidase M12A domain in the interval 71–270 (NAMKCWSSSC…TRINVLYNCR (200 aa)). Cystine bridges form between Cys75–Cys80, Cys120–Cys269, and Cys141–Cys161. His169 serves as a coordination point for Zn(2+). Glu170 is an active-site residue. Zn(2+) contacts are provided by His173 and His179.

The cofactor is Zn(2+).

It localises to the zymogen granule. The enzyme catalyses Hydrolysis of the inner layer of fish egg envelope. Also hydrolysis of casein and small molecule substrates such as succinyl-Leu-Leu-Val-Tyr-|-7-(4-methyl)coumarylamide.. Its function is as follows. Participates in the breakdown of the egg envelope, which is derived from the egg extracellular matrix, at the time of hatching. Thus allowing the newly hatched fish to swim free. HCE binds tightly to the egg envelope while it exerts the choriolytic swelling action. The polypeptide is High choriolytic enzyme 1 (hcea) (Oryzias latipes (Japanese rice fish)).